The following is a 344-amino-acid chain: N-acetyl-gamma-glutamyl-phosphate reductase 1 (344 aa).

C150 is an active-site residue.

Belongs to the NAGSA dehydrogenase family. Type 1 subfamily.

The protein localises to the cytoplasm. It catalyses the reaction N-acetyl-L-glutamate 5-semialdehyde + phosphate + NADP(+) = N-acetyl-L-glutamyl 5-phosphate + NADPH + H(+). It functions in the pathway amino-acid biosynthesis; L-arginine biosynthesis; N(2)-acetyl-L-ornithine from L-glutamate: step 3/4. Its function is as follows. Catalyzes the NADPH-dependent reduction of N-acetyl-5-glutamyl phosphate to yield N-acetyl-L-glutamate 5-semialdehyde. This is N-acetyl-gamma-glutamyl-phosphate reductase 1 from Pseudomonas putida (strain ATCC 47054 / DSM 6125 / CFBP 8728 / NCIMB 11950 / KT2440).